The primary structure comprises 376 residues: NADPH oxidase organizer 1 (376 aa).

The 131-residue stretch at 1–131 (MAGPRYPVSV…GFFAPQPLDL (131 aa)) folds into the PX domain. 2 consecutive SH3 domains span residues 163 to 225 (LEAQ…EAAP) and 237 to 296 (SSGP…PEGL). The disordered stretch occupies residues 302–376 (GTGFRGGDDP…DSVPHPTTEQ (75 aa)). Pro residues predominate over residues 326-335 (APPPTVPTRP). The interval 328 to 337 (PPTVPTRPSP) is proline-rich region; mediates mutually exclusive interactions with itself and NOXA1.

In terms of assembly, interacts with NOX1, NOXA1, CYBA/p22phox and NCF2/p67phox. Interacts with SH3PXD2A and SH3PXD2B. In terms of tissue distribution, expressed in testis, small and large intestines, liver, kidney and pancreas. Isoform 3 is mainly expressed in colon. Isoform 1 is preferentially expressed in testis.

It is found in the cell membrane. Functionally, constitutively potentiates the superoxide-generating activity of NOX1 and NOX3 and is required for the biogenesis of otoconia/otolith, which are crystalline structures of the inner ear involved in the perception of gravity. Isoform 3 is more potent than isoform 1 in activating NOX3. Together with NOXA1, may also substitute to NCF1/p47phox and NCF2/p67phox in supporting the phagocyte NOX2/gp91phox superoxide-generating activity. This chain is NADPH oxidase organizer 1 (NOXO1), found in Homo sapiens (Human).